The chain runs to 258 residues: Imidazole glycerol phosphate synthase subunit HisF (258 aa).

Catalysis depends on residues D11 and D130.

The protein belongs to the HisA/HisF family. In terms of assembly, heterodimer of HisH and HisF.

The protein resides in the cytoplasm. It carries out the reaction 5-[(5-phospho-1-deoxy-D-ribulos-1-ylimino)methylamino]-1-(5-phospho-beta-D-ribosyl)imidazole-4-carboxamide + L-glutamine = D-erythro-1-(imidazol-4-yl)glycerol 3-phosphate + 5-amino-1-(5-phospho-beta-D-ribosyl)imidazole-4-carboxamide + L-glutamate + H(+). The protein operates within amino-acid biosynthesis; L-histidine biosynthesis; L-histidine from 5-phospho-alpha-D-ribose 1-diphosphate: step 5/9. Functionally, IGPS catalyzes the conversion of PRFAR and glutamine to IGP, AICAR and glutamate. The HisF subunit catalyzes the cyclization activity that produces IGP and AICAR from PRFAR using the ammonia provided by the HisH subunit. The sequence is that of Imidazole glycerol phosphate synthase subunit HisF from Synechococcus sp. (strain CC9902).